A 167-amino-acid chain; its full sequence is uncharacterized protein (167 aa).

Transmembrane regions (helical) follow at residues 96 to 115 and 119 to 138; these read YVPA…FNFY and WGAL…IIAV.

It localises to the cell membrane. This is an uncharacterized protein from Bacillus subtilis (strain 168).